The chain runs to 651 residues: Carboxypeptidase S1 homolog A (651 aa).

Positions 1-19 (MHLATGLAVALPFIGAASA) are cleaved as a signal peptide. C50 and C121 are oxidised to a cystine. N-linked (GlcNAc...) asparagine glycosylation is found at N77, N125, N128, N161, N184, and N202. S238 is an active-site residue. N-linked (GlcNAc...) asparagine glycosylation is found at N260, N299, N308, N347, and N410. Cystine bridges form between C325–C361 and C332–C354. D458 is an active-site residue. Substrate is bound at residue C461. N-linked (GlcNAc...) asparagine glycans are attached at residues N474 and N504. The active site involves H515. A substrate-binding site is contributed by E516. The interval 604-630 (KSPAGKKQGPPPTSTSPPSPTSSSEGS) is disordered. The span at 612 to 623 (GPPPTSTSPPSP) shows a compositional bias: pro residues. S625 carries GPI-anchor amidated serine lipidation. Positions 626–651 (SSEGSVKEFSVSVLGVSVLAAITFFL) are cleaved as a propeptide — removed in mature form.

Belongs to the peptidase S10 family.

The protein localises to the cell membrane. It catalyses the reaction Preferential release of a C-terminal arginine or lysine residue.. Functionally, extracellular serine carboxypeptidase that contributes to pathogenicity. In Arthroderma otae (strain ATCC MYA-4605 / CBS 113480) (Microsporum canis), this protein is Carboxypeptidase S1 homolog A (SCPA).